The chain runs to 1096 residues: Carbamoyl phosphate synthase large chain (1096 aa).

Residues M1–E402 form a carboxyphosphate synthetic domain region. ATP is bound by residues R129, R169, G175, G176, E208, I210, E215, G241, V242, H243, Q285, and E299. The 196-residue stretch at K133 to I328 folds into the ATP-grasp 1 domain. The Mg(2+) site is built by Q285, E299, and N301. 3 residues coordinate Mn(2+): Q285, E299, and N301. Residues K403–I547 form an oligomerization domain region. Positions V548 to F950 are carbamoyl phosphate synthetic domain. The ATP-grasp 2 domain occupies S676 to V870. 10 residues coordinate ATP: R712, R754, L756, E761, G786, I787, H788, S789, Q829, and E841. Residues Q829, E841, and N843 each contribute to the Mg(2+) site. 3 residues coordinate Mn(2+): Q829, E841, and N843. An MGS-like domain is found at G951–R1095. The interval G951–R1096 is allosteric domain.

It belongs to the CarB family. In terms of assembly, composed of two chains; the small (or glutamine) chain promotes the hydrolysis of glutamine to ammonia, which is used by the large (or ammonia) chain to synthesize carbamoyl phosphate. Tetramer of heterodimers (alpha,beta)4. The cofactor is Mg(2+). Mn(2+) serves as cofactor.

It carries out the reaction hydrogencarbonate + L-glutamine + 2 ATP + H2O = carbamoyl phosphate + L-glutamate + 2 ADP + phosphate + 2 H(+). The enzyme catalyses hydrogencarbonate + NH4(+) + 2 ATP = carbamoyl phosphate + 2 ADP + phosphate + 2 H(+). Its pathway is amino-acid biosynthesis; L-arginine biosynthesis; carbamoyl phosphate from bicarbonate: step 1/1. It functions in the pathway pyrimidine metabolism; UMP biosynthesis via de novo pathway; (S)-dihydroorotate from bicarbonate: step 1/3. Large subunit of the glutamine-dependent carbamoyl phosphate synthetase (CPSase). CPSase catalyzes the formation of carbamoyl phosphate from the ammonia moiety of glutamine, carbonate, and phosphate donated by ATP, constituting the first step of 2 biosynthetic pathways, one leading to arginine and/or urea and the other to pyrimidine nucleotides. The large subunit (synthetase) binds the substrates ammonia (free or transferred from glutamine from the small subunit), hydrogencarbonate and ATP and carries out an ATP-coupled ligase reaction, activating hydrogencarbonate by forming carboxy phosphate which reacts with ammonia to form carbamoyl phosphate. The protein is Carbamoyl phosphate synthase large chain of Clavibacter sepedonicus (Clavibacter michiganensis subsp. sepedonicus).